The sequence spans 559 residues: MATATIALQVNGQQGGGSEPAAAAAVVAAGDKWKPPQGTDSIKMENGQSTAAKLGLPPLTPEQQEALQKAKKYAMEQSIKSVLVKQTIAHQQQQLTNLQMAAVTMGFGDPLSPLQSMAAQRQRALAIMCRVYVGSIYYELGEDTIRQAFAPFGPIKSIDMSWDSVTMKHKGFAFVEYEVPEAAQLALEQMNSVMLGGRNIKVGRPSNIGQAQPIIDQLAEEARAFNRIYVASVHQDLSDDDIKSVFEAFGKIKSCTLARDPTTGKHKGYGFIEYEKAQSSQDAVSSMNLFDLGGQYLRVGKAVTPPMPLLTPATPGGLPPAAAVAAAAATAKITAQEAVAGAAVLGTLGTPGLVSPALTLAQPLGTLPQAVMAAQAPGVITGVTPARPPIPVTIPSVGVVNPILASPPTLGLLEPKKEKEEEELFPESERPEMLSEQEHMSISGSSARHMVMQKLLRKQESTVMVLRNMVDPKDIDDDLEGEVTEECGKFGAVNRVIIYQEKQGEEEDAEIIVKIFVEFSIASETHKAIQALNGRWFAGRKVVAEVYDQERFDNSDLSA.

Residues 1–516 are inhibits homodimerization; sequence MATATIALQV…EDAEIIVKIF (516 aa). Glycyl lysine isopeptide (Lys-Gly) (interchain with G-Cter in SUMO2) cross-links involve residues Gln14 and Lys43. A Phosphothreonine modification is found at Thr60. Residues 77–559 form an inhibits transcriptional repression, interaction with ERCC3 and apoptosis induction region; the sequence is QSIKSVLVKQ…ERFDNSDLSA (483 aa). Residue Lys80 forms a Glycyl lysine isopeptide (Lys-Gly) (interchain with G-Cter in SUMO2) linkage. Ser112 carries the phosphoserine modification. RRM domains lie at 129-207 and 226-304; these read CRVY…RPSN and NRIY…KAVT. A Phosphoserine modification is found at Ser244. Lys251 carries the N6-acetyllysine modification. The residue at position 314 (Thr314) is a Phosphothreonine. The segment at 416-437 is disordered; sequence KKEKEEEELFPESERPEMLSEQ. A Glycyl lysine isopeptide (Lys-Gly) (interchain with G-Cter in SUMO2) cross-link involves residue Lys419. The segment covering 427 to 437 has biased composition (basic and acidic residues); the sequence is ESERPEMLSEQ. N6-acetyllysine is present on Lys454. Lys458 participates in a covalent cross-link: Glycyl lysine isopeptide (Lys-Gly) (interchain with G-Cter in SUMO2). The 88-residue stretch at 462–549 folds into the RRM 3; atypical domain; that stretch reads TVMVLRNMVD…RKVVAEVYDQ (88 aa).

Belongs to the RRM half pint family. As to quaternary structure, homodimer. Associates with the spliceosome. Found in a complex with RO60 and Y5 RNA. Found in a complex with FUBP1 and far upstream element (FUSE) DNA segment. Interacts directly with ERCC3. Interacts with CDK7 and GTF2H1. Interacts with SRSF11/P54. Does not interact with ERCC3 in xeroderma pigmentosum complementation group B (XPB) cells. Interacts with ARGLU1; interaction may be involved in ARGLU1-mediated modulation of alternative splicing. In terms of tissue distribution, isoform 2 is expressed in colonic epithelium and colorectal epithelium cancer (at protein level). Isoform 6 is expressed in colorectal epithelial cancer but below detection level in colonic epithelium. Expressed in heart, brain, placenta, lung, liver, skeletal muscle, kidney, pancreas, spleen, thymus, prostate, testis, ovary, small intestine, colon and peripheral blood leukocytes.

Its subcellular location is the nucleus. DNA- and RNA-binding protein, involved in several nuclear processes such as pre-mRNA splicing, apoptosis and transcription regulation. In association with FUBP1 regulates MYC transcription at the P2 promoter through the core-TFIIH basal transcription factor. Acts as a transcriptional repressor through the core-TFIIH basal transcription factor. Represses FUBP1-induced transcriptional activation but not basal transcription. Decreases ERCC3 helicase activity. Does not repress TFIIH-mediated transcription in xeroderma pigmentosum complementation group B (XPB) cells. Is also involved in pre-mRNA splicing. Promotes splicing of an intron with weak 3'-splice site and pyrimidine tract in a cooperative manner with U2AF2. Involved in apoptosis induction when overexpressed in HeLa cells. Isoform 6 failed to repress MYC transcription and inhibited FIR-induced apoptosis in colorectal cancer. Isoform 6 may contribute to tumor progression by enabling increased MYC expression and greater resistance to apoptosis in tumors than in normal cells. Modulates alternative splicing of several mRNAs. Binds to relaxed DNA of active promoter regions. Binds to the pyrimidine tract and 3'-splice site regions of pre-mRNA; binding is enhanced in presence of U2AF2. Binds to Y5 RNA in association with RO60. Binds to poly(U) RNA. The polypeptide is Poly(U)-binding-splicing factor PUF60 (Homo sapiens (Human)).